Here is a 327-residue protein sequence, read N- to C-terminus: rRNA 2'-O-methyltransferase fibrillarin (327 aa).

Positions 1 to 96 (MGTDYRNSGR…GFKGGAKTMV (96 aa)) are disordered. Asymmetric dimethylarginine occurs at positions 10, 19, 44, 49, 55, 65, 69, and 78. A compositionally biased stretch (basic and acidic residues) spans 22–56 (GNDRRDSGRSFGDRRPERPDFKRGDGGRGFGDRRG). Residues 73–90 (DGPGGRGGPGGPGGGFKG) show a composition bias toward gly residues. S-adenosyl-L-methionine-binding positions include 181–182 (TT), 200–201 (EF), 225–226 (DA), and 245–248 (DVAQ).

It belongs to the methyltransferase superfamily. Fibrillarin family. As to quaternary structure, component of box C/D small nucleolar ribonucleoprotein (snoRNP) particles. It is associated with the U3, U8 and U13 small nuclear RNAs. In terms of processing, by homology to other fibrillarins, some or all of the N-terminal domain arginines are modified to asymmetric dimethylarginine (DMA).

It localises to the nucleus. The protein localises to the nucleolus. It carries out the reaction L-glutaminyl-[histone H2A] + S-adenosyl-L-methionine = N(5)-methyl-L-glutaminyl-[histone H2A] + S-adenosyl-L-homocysteine + H(+). S-adenosyl-L-methionine-dependent methyltransferase that has the ability to methylate both RNAs and proteins. Involved in pre-rRNA processing. Utilizes the methyl donor S-adenosyl-L-methionine to catalyze the site-specific 2'-hydroxyl methylation of ribose moieties in pre-ribosomal RNA. Site specificity is provided by a guide RNA that base pairs with the substrate. Methylation occurs at a characteristic distance from the sequence involved in base pairing with the guide RNA. Also acts as a protein methyltransferase by mediating methylation of 'Gln-105' of histone H2A (H2AQ105me), a modification that impairs binding of the FACT complex and is specifically present at 35S ribosomal DNA locus. The polypeptide is rRNA 2'-O-methyltransferase fibrillarin (Giardia intestinalis (Giardia lamblia)).